A 175-amino-acid chain; its full sequence is MASRKAGTRGKVAATKQAQRGSSNVFSMFEQAQIQEFKEAFSCIDQNRDGIICKADLRETYSQLGKVSVPEEELDAMLQEGKGPINFTVFLTLFGEKLNGTDPEEAILSAFRMFDPSGKGVVNKDEFKQLLLTQADKFSPAEVEQMFALTPMDLAGNIDYKSLCYIITHGDEKEE.

Ala-2 bears the N-acetylalanine mark. Residues Ser-22 and Ser-23 each carry the phosphoserine modification. 3 consecutive EF-hand domains span residues 32-67 (AQIQ…LGKV), 102-137 (DPEE…QADK), and 138-173 (FSPA…GDEK). Ca(2+) is bound by residues Asp-45, Asn-47, Asp-49, and Asp-56.

In terms of assembly, myosin is a hexamer of 2 heavy chains and 4 light chains. As to expression, predominantly expressed in adult atrial muscle.

This is Myosin regulatory light chain 2, atrial isoform (MYL7) from Homo sapiens (Human).